Reading from the N-terminus, the 310-residue chain is tRNA uridine(34) hydroxylase (310 aa).

The Rhodanese domain maps to 127-225; it reads KDKNTIVVDT…YLEDMSKEES (99 aa). Residue Cys-185 is the Cysteine persulfide intermediate of the active site.

This sequence belongs to the TrhO family.

It carries out the reaction uridine(34) in tRNA + AH2 + O2 = 5-hydroxyuridine(34) in tRNA + A + H2O. Its function is as follows. Catalyzes oxygen-dependent 5-hydroxyuridine (ho5U) modification at position 34 in tRNAs. The sequence is that of tRNA uridine(34) hydroxylase from Prochlorococcus marinus subsp. pastoris (strain CCMP1986 / NIES-2087 / MED4).